Consider the following 847-residue polypeptide: Alanine--tRNA ligase (847 aa).

4 residues coordinate Zn(2+): His-554, His-558, Cys-656, and His-660.

This sequence belongs to the class-II aminoacyl-tRNA synthetase family. Requires Zn(2+) as cofactor.

The protein localises to the cytoplasm. The enzyme catalyses tRNA(Ala) + L-alanine + ATP = L-alanyl-tRNA(Ala) + AMP + diphosphate. Functionally, catalyzes the attachment of alanine to tRNA(Ala) in a two-step reaction: alanine is first activated by ATP to form Ala-AMP and then transferred to the acceptor end of tRNA(Ala). Also edits incorrectly charged Ser-tRNA(Ala) and Gly-tRNA(Ala) via its editing domain. The protein is Alanine--tRNA ligase of Helicobacter pylori (strain ATCC 700392 / 26695) (Campylobacter pylori).